Consider the following 271-residue polypeptide: Phosphatidylglycerol--prolipoprotein diacylglyceryl transferase (271 aa).

7 helical membrane-spanning segments follow: residues 10–30 (VALA…LVGI), 56–76 (LVFW…VLFY), 92–112 (WKGG…ALWF), 120–140 (FFQL…AGRI), 174–194 (PSQL…LWLF), 202–222 (MAVS…VEFV), and 237–257 (LTMG…LIWL). Arg-139 contributes to the a 1,2-diacyl-sn-glycero-3-phospho-(1'-sn-glycerol) binding site.

It belongs to the Lgt family.

Its subcellular location is the cell inner membrane. It carries out the reaction L-cysteinyl-[prolipoprotein] + a 1,2-diacyl-sn-glycero-3-phospho-(1'-sn-glycerol) = an S-1,2-diacyl-sn-glyceryl-L-cysteinyl-[prolipoprotein] + sn-glycerol 1-phosphate + H(+). The protein operates within protein modification; lipoprotein biosynthesis (diacylglyceryl transfer). In terms of biological role, catalyzes the transfer of the diacylglyceryl group from phosphatidylglycerol to the sulfhydryl group of the N-terminal cysteine of a prolipoprotein, the first step in the formation of mature lipoproteins. The polypeptide is Phosphatidylglycerol--prolipoprotein diacylglyceryl transferase (Pseudomonas fluorescens (strain Pf0-1)).